The sequence spans 433 residues: Pyrimidine-nucleoside phosphorylase (433 aa).

A phosphate-binding site is contributed by Lys-81–Ser-83. K(+) contacts are provided by Gly-88 and Thr-90. Phosphate is bound by residues Thr-92, Lys-108–Ser-110, and Thr-120. Substrate-binding residues include Arg-168 and Lys-187. K(+) is bound by residues Leu-243, Ala-246, and Glu-255.

Belongs to the thymidine/pyrimidine-nucleoside phosphorylase family. Homodimer. K(+) is required as a cofactor.

It catalyses the reaction uridine + phosphate = alpha-D-ribose 1-phosphate + uracil. The catalysed reaction is thymidine + phosphate = 2-deoxy-alpha-D-ribose 1-phosphate + thymine. The enzyme catalyses 2'-deoxyuridine + phosphate = 2-deoxy-alpha-D-ribose 1-phosphate + uracil. In terms of biological role, catalyzes phosphorolysis of the pyrimidine nucleosides uridine, thymidine and 2'-deoxyuridine with the formation of the corresponding pyrimidine base and ribose-1-phosphate. The protein is Pyrimidine-nucleoside phosphorylase of Bacillus subtilis (strain 168).